The following is a 432-amino-acid chain: Tryptophan--tRNA ligase (432 aa).

Residues 13-15 (TTS) and 21-22 (GN) each bind ATP. Positions 14–22 (TSGTPHLGN) match the 'HIGH' region motif. Residue D146 participates in L-tryptophan binding. ATP-binding positions include 158–160 (GRD), L198, and 205–209 (KMSKS). Residues 205 to 209 (KMSKS) carry the 'KMSKS' region motif.

This sequence belongs to the class-I aminoacyl-tRNA synthetase family. As to quaternary structure, homodimer.

Its subcellular location is the cytoplasm. It carries out the reaction tRNA(Trp) + L-tryptophan + ATP = L-tryptophyl-tRNA(Trp) + AMP + diphosphate + H(+). Functionally, catalyzes the attachment of tryptophan to tRNA(Trp). This chain is Tryptophan--tRNA ligase, found in Xanthomonas axonopodis pv. citri (strain 306).